A 58-amino-acid chain; its full sequence is Large ribosomal subunit protein eL24 (58 aa).

4 residues coordinate Zn(2+): C6, C9, C32, and C36. Residues 6–36 (CSFCGYDIEPGTGKMYVRRDGRVFYFCSGKC) form a C4-type zinc finger.

This sequence belongs to the eukaryotic ribosomal protein eL24 family. As to quaternary structure, part of the 50S ribosomal subunit. Forms a cluster with proteins L3 and L14. Zn(2+) is required as a cofactor.

Functionally, binds to the 23S rRNA. The sequence is that of Large ribosomal subunit protein eL24 from Archaeoglobus fulgidus (strain ATCC 49558 / DSM 4304 / JCM 9628 / NBRC 100126 / VC-16).